Reading from the N-terminus, the 148-residue chain is Protein Smg homolog (148 aa).

Belongs to the Smg family.

This Thiobacillus denitrificans (strain ATCC 25259 / T1) protein is Protein Smg homolog.